The chain runs to 319 residues: Thymidylate synthase (319 aa).

DUMP-binding positions include arginine 25 and 181–182; that span reads RR. The active-site Nucleophile is the cysteine 201. Residues 221–224, asparagine 232, and 262–264 contribute to the dUMP site; these read RSAD and HIY. Position 224 (aspartate 224) interacts with (6R)-5,10-methylene-5,6,7,8-tetrahydrofolate. Alanine 318 is a binding site for (6R)-5,10-methylene-5,6,7,8-tetrahydrofolate.

The protein belongs to the thymidylate synthase family. Bacterial-type ThyA subfamily. Homodimer.

It localises to the cytoplasm. The catalysed reaction is dUMP + (6R)-5,10-methylene-5,6,7,8-tetrahydrofolate = 7,8-dihydrofolate + dTMP. It participates in pyrimidine metabolism; dTTP biosynthesis. In terms of biological role, catalyzes the reductive methylation of 2'-deoxyuridine-5'-monophosphate (dUMP) to 2'-deoxythymidine-5'-monophosphate (dTMP) while utilizing 5,10-methylenetetrahydrofolate (mTHF) as the methyl donor and reductant in the reaction, yielding dihydrofolate (DHF) as a by-product. This enzymatic reaction provides an intracellular de novo source of dTMP, an essential precursor for DNA biosynthesis. The protein is Thymidylate synthase of Oenococcus oeni (strain ATCC BAA-331 / PSU-1).